A 520-amino-acid polypeptide reads, in one-letter code: Nonsense-mediated mRNA decay factor SMG9 (520 aa).

Disordered regions lie at residues 1–94 and 107–143; these read MSES…PAPL and GKGP…QRPT. N-acetylserine is present on Ser2. 5 positions are modified to phosphoserine: Ser2, Ser4, Ser7, Ser32, and Ser53. Basic and acidic residues predominate over residues 36–53; the sequence is GRERDYIAPWERERRDGS. Residues 78 to 94 are compositionally biased toward pro residues; the sequence is QPPPSTAPAAPPAPAPL. Residues 112–121 are compositionally biased toward low complexity; it reads AATGASTPEG. The segment covering 122 to 133 has biased composition (pro residues); it reads TAPPPPTAPAPP. The residue at position 451 (Ser451) is a Phosphoserine.

Belongs to the SMG9 family. In terms of assembly, self-associates to form homodimers and forms heterodimers with SMG8; these assembly forms may represent SMG1C intermediate forms. Component of the SMG1C complex composed of SMG1, SMG8 and SMG9. Interacts with DHX34; the interaction is RNA-independent. In terms of processing, phosphorylated by SMG1.

Its function is as follows. Involved in nonsense-mediated decay (NMD) of mRNAs containing premature stop codons. Is recruited by release factors to stalled ribosomes together with SMG1 and SMG8 (forming the SMG1C protein kinase complex) and, in the SMG1C complex, is required for the efficient association between SMG1 and SMG8. Plays a role in brain, heart, and eye development. This Rattus norvegicus (Rat) protein is Nonsense-mediated mRNA decay factor SMG9.